An 887-amino-acid chain; its full sequence is Alanine--tRNA ligase (887 aa).

The Zn(2+) site is built by H581, H585, C683, and H687.

It belongs to the class-II aminoacyl-tRNA synthetase family. It depends on Zn(2+) as a cofactor.

The protein resides in the cytoplasm. It catalyses the reaction tRNA(Ala) + L-alanine + ATP = L-alanyl-tRNA(Ala) + AMP + diphosphate. Functionally, catalyzes the attachment of alanine to tRNA(Ala) in a two-step reaction: alanine is first activated by ATP to form Ala-AMP and then transferred to the acceptor end of tRNA(Ala). Also edits incorrectly charged Ser-tRNA(Ala) and Gly-tRNA(Ala) via its editing domain. The chain is Alanine--tRNA ligase from Ehrlichia ruminantium (strain Gardel).